The following is a 132-amino-acid chain: Small ribosomal subunit protein uS11 (132 aa).

Residues 113–132 (VTPIPHDGTRAPGGKRGRRV) are disordered.

It belongs to the universal ribosomal protein uS11 family. In terms of assembly, part of the 30S ribosomal subunit.

Functionally, located on the platform of the 30S subunit. This chain is Small ribosomal subunit protein uS11, found in Methanocella arvoryzae (strain DSM 22066 / NBRC 105507 / MRE50).